A 750-amino-acid polypeptide reads, in one-letter code: MIIRSPEPEVKIVVDRNPIKTSFEEWARPGHFSRTIAKGPDTTTWIWNLHADAHDFDSHTSDLEEISRKVFSAHFGQLSIIFLWLSGMYFHGARFSNYEAWLSDPTHIAPSAQVVWPIVGQEILNGDVGGGFRGIQITSGFFQIWRASGITSELQLYCTAIGALVFASLMLFAGWFHYHKAAPKLAWFQDVESMLNHHLAGLLGLGSLSWAGHQIHVSLPINQFLDAGVDPKEIPLPHEFILNRDLLAQLYPSFAEGATPFFTLNWAKYAEFLSFRGGLDPITGGLWLSDIAHHHLAIAILFLIAGHMYRTNWAIGHGLKDILEAHKGPFTGQGHKGLYEILTTSWHAQLSLNLAMLGSLTIVVAHHMYSMPPYPYLAIDYGTQLSLFTHHMWIGGFLIVGAAAHAAIFMVRDYDPTTRYNDLLDRVLRHRDAIISHLNWACIFLGFHSFGLYIHNDTMSALGRPQDMFSDTAIQLQPIFAQWVQNTHALAPNVTAPGATTSTSLIWGGGELVAVGGKVALLPIPLGTADFLVHHIHAFTIHVTVLILLKGVLFARSSRLIPDKANLGFRFPCDGPGRGGTCQVSAWDHVFLGLFWMYNAISVVIFHFSWKMQSDVWGTISDQGVVTHITGGNFAQSSITINGWLRDFLWAQASQVIQSYGSSLSAYGLFFLGAHFVWAFSLMFLFSGRGYWQELIESIVWAHNKLKVAPATQPRALSIVQGRAVGVTHYLLGGIATTWAFFLARIIAVG.

8 consecutive transmembrane segments (helical) span residues 70–93 (VFSA…FHGA), 156–179 (LYCT…FHYH), 195–219 (LNHH…HVSL), 291–309 (IAHH…GHMY), 346–369 (WHAQ…HHMY), 385–411 (LSLF…IFMV), 433–455 (AIIS…LYIH), and 531–549 (FLVH…LILL). 2 residues coordinate [4Fe-4S] cluster: C573 and C582. 2 helical membrane-spanning segments follow: residues 589–610 (HVFL…HFSW) and 664–686 (LSAY…MFLF). Position 675 (H675) interacts with chlorophyll a'. Chlorophyll a-binding residues include M683 and Y691. Residue W692 participates in phylloquinone binding. The helical transmembrane segment at 724 to 744 (AVGVTHYLLGGIATTWAFFLA) threads the bilayer.

This sequence belongs to the PsaA/PsaB family. The PsaA/B heterodimer binds the P700 chlorophyll special pair and subsequent electron acceptors. PSI consists of a core antenna complex that captures photons, and an electron transfer chain that converts photonic excitation into a charge separation. The eukaryotic PSI reaction center is composed of at least 11 subunits. P700 is a chlorophyll a/chlorophyll a' dimer, A0 is one or more chlorophyll a, A1 is one or both phylloquinones and FX is a shared 4Fe-4S iron-sulfur center. is required as a cofactor.

It is found in the plastid. The protein localises to the chloroplast thylakoid membrane. The catalysed reaction is reduced [plastocyanin] + hnu + oxidized [2Fe-2S]-[ferredoxin] = oxidized [plastocyanin] + reduced [2Fe-2S]-[ferredoxin]. Functionally, psaA and PsaB bind P700, the primary electron donor of photosystem I (PSI), as well as the electron acceptors A0, A1 and FX. PSI is a plastocyanin-ferredoxin oxidoreductase, converting photonic excitation into a charge separation, which transfers an electron from the donor P700 chlorophyll pair to the spectroscopically characterized acceptors A0, A1, FX, FA and FB in turn. Oxidized P700 is reduced on the lumenal side of the thylakoid membrane by plastocyanin. The chain is Photosystem I P700 chlorophyll a apoprotein A1 from Phalaenopsis aphrodite subsp. formosana (Moth orchid).